The primary structure comprises 1355 residues: MKKTMLAIILIPLVYAVAGETVADDEVFFLSAPQLDGTLIDSWGTDAVITGSTLMNRLWKTFTVSATHTLREYGRVAKSVNSTAATKCTHLCVPGTVLKLSVQATRSNANNNASWRFARPVITNMHELNETCIPMEYDCEEVISEKTSLNTLSITIYGSNDLKKALGENSTCNKTWTQGCAIATALTALYENKSVDARKLNILRGTSYTCLLGYLGIGELEPNSPCWTQLGPMCYGPLAEQVCVTAGRNPFGVVPRADRPVSTGVDCRVGSRADLQFSGLTKGLFAERGCDRVFVRCDLIDPYDPPATAAEFELHVECRSSFRVSGFPGEGEDMGLELAFNNFGLEGLIRTKQDRLTIITGIFDIRNNKYNALVINWIPTPELLDTFHMFMAELDTFRKIHRPTVRLGVVITGASPFVEQYNFKLLSGVVDMVYIHPQIQPMTSTPTLTCPMPIRSDSLECGEPHRQCPGFDGYRHLTYATRFLLGHISPEKLTLGLDVSCQLWGRRVRQYDTNWYFQDNLFSEVQGGWVSRGYITDVIQPNMTQAIQLNGCHGVFGPELDILLPSADATPYVGLLWSQPSDLEDAVDFSMALGITRFSIEGALGDVYMDSSENLKTVSTVHEAVTVRMRAHAMMEEMLGEGGLAAFDESMIWANVTRSTGTATTGARKRRALTTQGPDGVNRTIPFSASVQSGTSIVRIGTGPKMVCPGIIASVRGLLFSRTSYQGFYRLTFFQNLYVTQLQNLTGCTAVKPEDLPVITQATKVPSVFAIDINTFGVVNGSEYYVVGLEGTDLVQYSPQVKQSCAFINTNETFNQTFITIDERFFFTGPRPVADGFVIPAGINFFGSDNIMTVDYIDFNVTCMNYSNPSVQSCIATVCAANVTECTPRATLLCNQTAAILLDFQRSNELLKNSLVDLDLEHEKVKMFAPASGGSVPTSDKFGLSVAAITMSSAALVASTAALAVATLAASKIDGLQAQLDKTADVITELGDSIALISAKLDRNIRAVNGRVDDLQNQINLQMLAMDTNFKRLATGLKELGTTTNERLGEVMAYQQWYQQIMSLTNQVTQGAIQIGYKVGMIRTCVKSLLAGTMAGCPTDASSFRDHPGLTFRKTVRALLYRDQKLFIVNEVPQTLTARSVQVFIPSPTITEKKVCWPDYKLMHVDGKVVAPLECTGKYCSEPIEATDYQECLTNPSTCRYVCGDCYRGICYNRTTEDISIKFENVTHALSVSDLTSPLFNSIPQIVSMEMEIQDLKLELIQLQKINTSVHMENITGDIDAMKATIEEYRAEMAKLRVTGFGEWLKYFIYAILGVIAIGALIAIIFMAVKCYQARALLSMTAYQPVPTRPMGMMY.

A signal peptide spans 1–16; that stretch reads MKKTMLAIILIPLVYA. Asparagine 81, asparagine 112, asparagine 129, asparagine 169, asparagine 173, asparagine 192, asparagine 542, asparagine 655, asparagine 682, asparagine 744, asparagine 780, asparagine 811, asparagine 815, asparagine 860, asparagine 865, asparagine 882, asparagine 895, asparagine 1213, asparagine 1225, asparagine 1267, and asparagine 1274 each carry an N-linked (GlcNAc...) asparagine; by host glycan. Residues 1245–1299 are a coiled coil; it reads QIVSMEMEIQDLKLELIQLQKINTSVHMENITGDIDAMKATIEEYRAEMAKLRVT. The helical transmembrane segment at 1308–1328 threads the bilayer; the sequence is FIYAILGVIAIGALIAIIFMA.

Its subcellular location is the host membrane. The chain is Probable major glycoprotein (ORF46) from Ictaluridae (bullhead catfishes).